Consider the following 179-residue polypeptide: Large ribosomal subunit protein uL6 (179 aa).

This sequence belongs to the universal ribosomal protein uL6 family. In terms of assembly, part of the 50S ribosomal subunit.

This protein binds to the 23S rRNA, and is important in its secondary structure. It is located near the subunit interface in the base of the L7/L12 stalk, and near the tRNA binding site of the peptidyltransferase center. The polypeptide is Large ribosomal subunit protein uL6 (Rhodococcus jostii (strain RHA1)).